A 594-amino-acid polypeptide reads, in one-letter code: APOBEC1 complementation factor (594 aa).

3 RRM domains span residues Cys56–Asp134, Cys136–Pro218, and Lys231–Pro303. The required for nuclear localization stretch occupies residues His360–Arg409. The residue at position 499 (Thr499) is a Phosphothreonine.

In terms of assembly, part of the apolipoprotein B mRNA editing complex with APOBEC1. Interacts with TNPO2; TNPO2 may be responsible for transport of A1CF into the nucleus. Interacts with SYNCRIP. Interacts with CELF2/CUGBP2. Interacts with RBM47. In terms of tissue distribution, widely expressed with highest levels in brain, liver, pancreas, colon and spleen.

Its subcellular location is the nucleus. The protein resides in the endoplasmic reticulum. It is found in the cytoplasm. In terms of biological role, essential component of the apolipoprotein B mRNA editing enzyme complex which is responsible for the postranscriptional editing of a CAA codon for Gln to a UAA codon for stop in APOB mRNA. Binds to APOB mRNA and is probably responsible for docking the catalytic subunit, APOBEC1, to the mRNA to allow it to deaminate its target cytosine. The complex also protects the edited APOB mRNA from nonsense-mediated decay. This chain is APOBEC1 complementation factor (A1CF), found in Homo sapiens (Human).